A 269-amino-acid polypeptide reads, in one-letter code: Formamidopyrimidine-DNA glycosylase (269 aa).

P2 (schiff-base intermediate with DNA) is an active-site residue. The Proton donor role is filled by E3. The Proton donor; for beta-elimination activity role is filled by K57. Residues H90, R109, and R150 each coordinate DNA. The FPG-type zinc finger occupies 235–269 (NVYGRAGQPCVQCDAILKADRHGQRSTAYCPQCQR). R259 functions as the Proton donor; for delta-elimination activity in the catalytic mechanism.

This sequence belongs to the FPG family. As to quaternary structure, monomer. Requires Zn(2+) as cofactor.

The catalysed reaction is Hydrolysis of DNA containing ring-opened 7-methylguanine residues, releasing 2,6-diamino-4-hydroxy-5-(N-methyl)formamidopyrimidine.. It catalyses the reaction 2'-deoxyribonucleotide-(2'-deoxyribose 5'-phosphate)-2'-deoxyribonucleotide-DNA = a 3'-end 2'-deoxyribonucleotide-(2,3-dehydro-2,3-deoxyribose 5'-phosphate)-DNA + a 5'-end 5'-phospho-2'-deoxyribonucleoside-DNA + H(+). Its function is as follows. Involved in base excision repair of DNA damaged by oxidation or by mutagenic agents. Acts as a DNA glycosylase that recognizes and removes damaged bases. Has a preference for oxidized purines, such as 7,8-dihydro-8-oxoguanine (8-oxoG). Has AP (apurinic/apyrimidinic) lyase activity and introduces nicks in the DNA strand. Cleaves the DNA backbone by beta-delta elimination to generate a single-strand break at the site of the removed base with both 3'- and 5'-phosphates. This Alcanivorax borkumensis (strain ATCC 700651 / DSM 11573 / NCIMB 13689 / SK2) protein is Formamidopyrimidine-DNA glycosylase.